Here is a 253-residue protein sequence, read N- to C-terminus: HTH-type transcriptional repressor DasR (253 aa).

In terms of domain architecture, HTH gntR-type spans 16–86 (RAQRVPKYYR…QGKGTFVAKP (71 aa)). Positions 46–65 (ERTLAAEFDTSRTTVPQALQ) form a DNA-binding region, H-T-H motif.

The protein resides in the cytoplasm. In terms of biological role, global regulator that is part of the nutrient-sensing system. In the absence of glucosamine 6-P (GlcN6P), represses the phosphotransferase system (PTS) specific for the uptake of N-acetylglucosamine (PTSNag), and genes involved in the metabolism of chitin, as well as several genes involved in development, thereby linking carbon availability to morphogenesis. Regulates the dasABC transport operon involved in glucose-related morphogenesis. Essential for development. This chain is HTH-type transcriptional repressor DasR (dasR), found in Streptomyces griseus.